The chain runs to 115 residues: Large ribosomal subunit protein mL60 (115 aa).

The N-terminal 23 residues, 1–23 (MLGAFNSTLARFGGLVHKVPWRL), are a transit peptide targeting the mitochondrion. Positions 88 to 115 (AGLQGFRKGVHKSPKWTRSTNRVNPTGF) are disordered. Positions 103–115 (WTRSTNRVNPTGF) are enriched in polar residues.

Belongs to the mitochondrion-specific ribosomal protein mL60 family. Component of the mitochondrial large ribosomal subunit (mt-LSU). Mature yeast 74S mitochondrial ribosomes consist of a small (37S) and a large (54S) subunit. The 37S small subunit contains a 15S ribosomal RNA (15S mt-rRNA) and at least 32 different proteins. The 54S large subunit contains a 21S rRNA (21S mt-rRNA) and at least 45 different proteins.

The protein resides in the mitochondrion. In terms of biological role, component of the mitochondrial ribosome (mitoribosome), a dedicated translation machinery responsible for the synthesis of mitochondrial genome-encoded proteins, including at least some of the essential transmembrane subunits of the mitochondrial respiratory chain. The mitoribosomes are attached to the mitochondrial inner membrane and translation products are cotranslationally integrated into the membrane. In Schizosaccharomyces pombe (strain 972 / ATCC 24843) (Fission yeast), this protein is Large ribosomal subunit protein mL60 (mrpl31).